We begin with the raw amino-acid sequence, 392 residues long: Probable tRNA sulfurtransferase (392 aa).

Positions 61-168 (DEALKLLSKV…EFTYIYSEII (108 aa)) constitute a THUMP domain. ATP-binding positions include 185-186 (LL), 210-211 (HF), arginine 267, glycine 289, and glutamine 298.

Belongs to the ThiI family.

It localises to the cytoplasm. It catalyses the reaction [ThiI sulfur-carrier protein]-S-sulfanyl-L-cysteine + a uridine in tRNA + 2 reduced [2Fe-2S]-[ferredoxin] + ATP + H(+) = [ThiI sulfur-carrier protein]-L-cysteine + a 4-thiouridine in tRNA + 2 oxidized [2Fe-2S]-[ferredoxin] + AMP + diphosphate. The enzyme catalyses [ThiS sulfur-carrier protein]-C-terminal Gly-Gly-AMP + S-sulfanyl-L-cysteinyl-[cysteine desulfurase] + AH2 = [ThiS sulfur-carrier protein]-C-terminal-Gly-aminoethanethioate + L-cysteinyl-[cysteine desulfurase] + A + AMP + 2 H(+). It functions in the pathway cofactor biosynthesis; thiamine diphosphate biosynthesis. Catalyzes the ATP-dependent transfer of a sulfur to tRNA to produce 4-thiouridine in position 8 of tRNAs, which functions as a near-UV photosensor. Also catalyzes the transfer of sulfur to the sulfur carrier protein ThiS, forming ThiS-thiocarboxylate. This is a step in the synthesis of thiazole, in the thiamine biosynthesis pathway. The sulfur is donated as persulfide by IscS. This is Probable tRNA sulfurtransferase from Acetivibrio thermocellus (strain ATCC 27405 / DSM 1237 / JCM 9322 / NBRC 103400 / NCIMB 10682 / NRRL B-4536 / VPI 7372) (Clostridium thermocellum).